We begin with the raw amino-acid sequence, 492 residues long: Solute carrier family 2, facilitated glucose transporter member 1 (492 aa).

At M1 the chain carries N-acetylmethionine. Residues 1–11 (MDPSSKKVTGR) are Cytoplasmic-facing. A helical transmembrane segment spans residues 12–33 (LMLAVGGAVLGSLQFGYNTGVI). Residues 34 to 66 (NAPQKVIEEFYNQTWNHRYGEPIPSTTLTTLWS) are Extracellular-facing. N-linked (GlcNAc...) asparagine glycosylation occurs at N45. Residues 67 to 87 (LSVAIFSVGGMIGSFSVGLFV) form a helical membrane-spanning segment. Residues 88–90 (NRF) are Cytoplasmic-facing. Residues 91–112 (GRRNSMLMMNLLAFVAAVLMGF) form a helical membrane-spanning segment. Residues 113-120 (SKLGKSFE) are Extracellular-facing. The helical transmembrane segment at 121–144 (MLILGRFIIGVYCGLTTGFVPMYV) threads the bilayer. Residues 145–155 (GEVSPTALRGA) are Cytoplasmic-facing. A helical transmembrane segment spans residues 156 to 176 (LGTLHQLGIVVGILIAQVFGL). Position 161 (Q161) interacts with D-glucose. The Extracellular segment spans residues 177 to 185 (DSIMGNADL). Residues 186 to 206 (WPLLLSVIFIPALLQCILLPF) traverse the membrane as a helical segment. At 207–271 (CPESPRFLLI…LFRSPAYRQP (65 aa)) the chain is on the cytoplasmic side. S226 carries the post-translational modification Phosphoserine. The helical transmembrane segment at 272 to 293 (ILIAVVLQLSQQLSGINAVFYY) threads the bilayer. D-glucose-binding positions include 282–283 (QQ) and N288. Over 294–306 (STSIFEKAGVQQP) the chain is Extracellular. Residues 307–328 (VYATIGSGIVNTAFTVVSLFVV) form a helical membrane-spanning segment. N317 provides a ligand contact to D-glucose. At 329–334 (ERAGRR) the chain is on the cytoplasmic side. Residues 335–355 (TLHLIGLAGMAGCAVLMTIAL) traverse the membrane as a helical segment. Topologically, residues 356-365 (ALLERLPWMS) are extracellular. Residues 366–388 (YLSIVAIFGFVAFFEVGPGPIPW) traverse the membrane as a helical segment. The D-glucose site is built by E380 and W388. Residues 389 to 401 (FIVAELFSQGPRP) lie on the Cytoplasmic side of the membrane. A helical membrane pass occupies residues 402–422 (AAIAVAGFSNWTSNFIVGMCF). Residues 423-429 (QYVEQLC) are Extracellular-facing. Residues 430 to 450 (GPYVFIIFTVLLVLFFIFTYF) traverse the membrane as a helical segment. The Cytoplasmic portion of the chain corresponds to 451–492 (KVPETKGRTFDEIASGFRQGGASQSDKTPEELFHPLGADSQV). Position 465 is a phosphoserine (S465). Residues 468–492 (RQGGASQSDKTPEELFHPLGADSQV) form a disordered region. At T478 the chain carries Phosphothreonine. Position 490 is a phosphoserine (S490).

This sequence belongs to the major facilitator superfamily. Sugar transporter (TC 2.A.1.1) family. Glucose transporter subfamily. Found in a complex with ADD2, DMTN and SLC2A1. Interacts (via C-terminus cytoplasmic region) with DMTN isoform 2. Interacts with SNX27; the interaction is required when endocytosed to prevent degradation in lysosomes and promote recycling to the plasma membrane. Interacts with GIPC (via PDZ domain). Interacts with STOM. Interacts with SGTA (via Gln-rich region). Interacts with isoform 1 of BSG. Interacts with SMIM43; the interaction may promote SLC2A1-mediated glucose transport to meet the energy needs of mesendoderm differentiation. In terms of processing, phosphorylation at Ser-226 by PKC promotes glucose uptake by increasing cell membrane localization. Retina (at protein level).

It is found in the cell membrane. The protein localises to the photoreceptor inner segment. The catalysed reaction is D-glucose(out) = D-glucose(in). Its activity is regulated as follows. The uptake of glucose is inhibited by cytochalasin B. Glucose uptake is increased in response to phorbol ester 12-O-tetradecanoylphorbol-13-acetate (TPA) treatment: TPA-induced glucose uptake requires phosphorylation at Ser-226. Functionally, facilitative glucose transporter, which is responsible for constitutive or basal glucose uptake. Has a very broad substrate specificity; can transport a wide range of aldoses including both pentoses and hexoses. Most important energy carrier of the brain: present at the blood-brain barrier and assures the energy-independent, facilitative transport of glucose into the brain. In association with BSG and NXNL1, promotes retinal cone survival by increasing glucose uptake into photoreceptors. Required for mesendoderm differentiation. This Mus musculus (Mouse) protein is Solute carrier family 2, facilitated glucose transporter member 1.